Consider the following 846-residue polypeptide: Translation initiation factor IF-2 (846 aa).

Positions 198–219 (YKREEEEKKSKAKKAGGKGFKK) are disordered. The segment covering 207-219 (SKAKKAGGKGFKK) has biased composition (basic residues). One can recognise a tr-type G domain in the interval 345 to 512 (SRAPVVTIMG…AVLLQSEVLE (168 aa)). Residues 354–361 (GHVDHGKT) form a G1 region. 354–361 (GHVDHGKT) is a binding site for GTP. A G2 region spans residues 379-383 (GITQH). The interval 400–403 (DTPG) is G3. GTP-binding positions include 400–404 (DTPGH) and 454–457 (NKID). The G4 stretch occupies residues 454–457 (NKID). A G5 region spans residues 490-492 (SAK).

This sequence belongs to the TRAFAC class translation factor GTPase superfamily. Classic translation factor GTPase family. IF-2 subfamily.

It localises to the cytoplasm. One of the essential components for the initiation of protein synthesis. Protects formylmethionyl-tRNA from spontaneous hydrolysis and promotes its binding to the 30S ribosomal subunits. Also involved in the hydrolysis of GTP during the formation of the 70S ribosomal complex. The chain is Translation initiation factor IF-2 from Francisella tularensis subsp. tularensis (strain SCHU S4 / Schu 4).